Here is a 245-residue protein sequence, read N- to C-terminus: Probable phosphatase YcdX (245 aa).

Zn(2+)-binding residues include His-7, His-9, His-15, His-40, Glu-73, His-101, His-131, Asp-192, and His-194.

The protein belongs to the PHP family. Homotrimer. Requires Zn(2+) as cofactor.

In Salmonella arizonae (strain ATCC BAA-731 / CDC346-86 / RSK2980), this protein is Probable phosphatase YcdX.